Consider the following 433-residue polypeptide: Glutamate-1-semialdehyde 2,1-aminomutase (433 aa).

The residue at position 271 (Lys271) is an N6-(pyridoxal phosphate)lysine.

Belongs to the class-III pyridoxal-phosphate-dependent aminotransferase family. HemL subfamily. In terms of assembly, homodimer. Pyridoxal 5'-phosphate serves as cofactor.

The protein resides in the cytoplasm. It carries out the reaction (S)-4-amino-5-oxopentanoate = 5-aminolevulinate. It participates in porphyrin-containing compound metabolism; protoporphyrin-IX biosynthesis; 5-aminolevulinate from L-glutamyl-tRNA(Glu): step 2/2. The protein operates within porphyrin-containing compound metabolism; chlorophyll biosynthesis. The sequence is that of Glutamate-1-semialdehyde 2,1-aminomutase from Prochlorococcus marinus subsp. pastoris (strain CCMP1986 / NIES-2087 / MED4).